We begin with the raw amino-acid sequence, 1144 residues long: Formin-like protein 18 (1144 aa).

The 177-residue stretch at L17–S193 folds into the Phosphatase tensin-type domain. C126 acts as the Phosphocysteine intermediate in catalysis. The 140-residue stretch at D199–M338 folds into the C2 tensin-type domain. Disordered regions lie at residues I429–K463 and K482–G729. Positions S441–S450 are enriched in basic and acidic residues. A compositionally biased stretch (polar residues) spans S491–I522. The span at L526 to E536 shows a compositional bias: basic and acidic residues. A compositionally biased stretch (low complexity) spans T538 to S548. Positions P555 to P580 are enriched in polar residues. Pro residues predominate over residues R603–I613. Over residues S614–I629 the composition is skewed to low complexity. The span at G633–L643 shows a compositional bias: pro residues. The span at Q644–S653 shows a compositional bias: low complexity. The segment covering N669–L678 has biased composition (pro residues). A compositionally biased stretch (low complexity) spans H679–S695. The segment covering P696–A705 has biased composition (pro residues). Residues K735–K1135 enclose the FH2 domain.

It belongs to the formin-like family. Class-II subfamily.

The chain is Formin-like protein 18 (FH18) from Arabidopsis thaliana (Mouse-ear cress).